A 143-amino-acid polypeptide reads, in one-letter code: Large ribosomal subunit protein uL15 (143 aa).

The segment at 1–56 (MELNSIKPAEGSKHAKRRVGRGIGSGLGKTAGRGHKGQKSRSGGYHKVGFEGGQMP) is disordered. Gly residues predominate over residues 21–31 (RGIGSGLGKTA).

The protein belongs to the universal ribosomal protein uL15 family. In terms of assembly, part of the 50S ribosomal subunit.

Binds to the 23S rRNA. The sequence is that of Large ribosomal subunit protein uL15 from Delftia acidovorans (strain DSM 14801 / SPH-1).